We begin with the raw amino-acid sequence, 40 residues long: Biotin carboxylase (40 aa).

The 40-residue stretch at 1 to 40 (ILVANRGEIAVRLLEEAPSPALTPELRITAYLPSGGPFVR) folds into the Biotin carboxylation domain. The ATP-grasp domain maps to 13-27 (LLEEAPSPALTPELR).

As to quaternary structure, acetyl-CoA carboxylase is a heterohexamer of biotin carboxyl carrier protein, biotin carboxylase and the two subunits of carboxyl transferase in a 2:2 complex. Mg(2+) serves as cofactor. It depends on Mn(2+) as a cofactor.

The enzyme catalyses N(6)-biotinyl-L-lysyl-[protein] + hydrogencarbonate + ATP = N(6)-carboxybiotinyl-L-lysyl-[protein] + ADP + phosphate + H(+). It functions in the pathway lipid metabolism; malonyl-CoA biosynthesis; malonyl-CoA from acetyl-CoA: step 1/1. In terms of biological role, this protein is a component of the acetyl coenzyme A carboxylase complex; first, biotin carboxylase catalyzes the carboxylation of the carrier protein and then the transcarboxylase transfers the carboxyl group to form malonyl-CoA. This chain is Biotin carboxylase, found in Populus euphratica (Euphrates poplar).